The following is a 239-amino-acid chain: tRNA1(Val) (adenine(37)-N6)-methyltransferase (239 aa).

This sequence belongs to the methyltransferase superfamily. tRNA (adenine-N(6)-)-methyltransferase family.

The protein resides in the cytoplasm. It carries out the reaction adenosine(37) in tRNA1(Val) + S-adenosyl-L-methionine = N(6)-methyladenosine(37) in tRNA1(Val) + S-adenosyl-L-homocysteine + H(+). Functionally, specifically methylates the adenine in position 37 of tRNA(1)(Val) (anticodon cmo5UAC). The chain is tRNA1(Val) (adenine(37)-N6)-methyltransferase from Trichodesmium erythraeum (strain IMS101).